A 583-amino-acid polypeptide reads, in one-letter code: Protein translocase subunit SecD (583 aa).

A run of 6 helical transmembrane segments spans residues 7 to 27 (FGVV…TLQW), 419 to 439 (LVWG…EAGV), 446 to 468 (LLNL…LSSI), 469 to 489 (AGMI…FERI), 511 to 531 (FWAI…LSVL), and 538 to 558 (GFAY…LFVS).

It belongs to the SecD/SecF family. SecD subfamily. In terms of assembly, forms a complex with SecF. Part of the essential Sec protein translocation apparatus which comprises SecA, SecYEG and auxiliary proteins SecDF. Other proteins may also be involved.

The protein localises to the cell inner membrane. Functionally, part of the Sec protein translocase complex. Interacts with the SecYEG preprotein conducting channel. SecDF uses the proton motive force (PMF) to complete protein translocation after the ATP-dependent function of SecA. The protein is Protein translocase subunit SecD of Treponema pallidum (strain Nichols).